The chain runs to 405 residues: L-carnitine CoA-transferase (405 aa).

CoA is bound by residues lysine 97 and arginine 104. Aspartate 169 functions as the Nucleophile in the catalytic mechanism.

This sequence belongs to the CoA-transferase III family. CaiB subfamily. Homodimer.

Its subcellular location is the cytoplasm. The catalysed reaction is crotonobetainyl-CoA + (R)-carnitine = crotonobetaine + (R)-carnitinyl-CoA. It carries out the reaction 4-(trimethylamino)butanoyl-CoA + (R)-carnitine = (R)-carnitinyl-CoA + 4-(trimethylamino)butanoate. The protein operates within amine and polyamine metabolism; carnitine metabolism. Catalyzes the reversible transfer of the CoA moiety from gamma-butyrobetainyl-CoA to L-carnitine to generate L-carnitinyl-CoA and gamma-butyrobetaine. Is also able to catalyze the reversible transfer of the CoA moiety from gamma-butyrobetainyl-CoA or L-carnitinyl-CoA to crotonobetaine to generate crotonobetainyl-CoA. The protein is L-carnitine CoA-transferase of Escherichia coli (strain SE11).